Consider the following 58-residue polypeptide: Gigasin-4 (58 aa).

Component of the organic matrix of calcified shell layers.

This is Gigasin-4 from Magallana gigas (Pacific oyster).